The primary structure comprises 271 residues: Transcription factor PU.1 (271 aa).

Residues 124-164 (LSPAHQQSSDEEEGERQSPPLEVSDGEADGLEPGPGLLHGE) form a disordered region. Residues S141 and S147 each carry the phosphoserine modification. Residues 154–164 (LEPGPGLLHGE) show a composition bias toward low complexity. A DNA-binding region (ETS) is located at residues 171-254 (IRLYQFLLDL…VKKKLTYQFS (84 aa)). DNA contacts are provided by K218, R231, R234, and K244.

It belongs to the ETS family. In terms of assembly, binds DNA as a monomer. Can form homomers. Directly interacts with CEBPD/NF-IL6-beta; this interaction does not affect DNA-binding properties of each partner. Interacts with NONO/p54(nrb). Interacts with RUNX1/AML1. Interacts with GFI1; the interaction represses SPI1 transcriptional activity, hence blocks SPI1-induced macrophage differentiation of myeloid progenitor cells. Interacts with CEBPE. Interacts with IRF4/Pip and IRF8. Interacts with JUN. Interacts with RB1. Interacts with TBP.

The protein localises to the nucleus. Its activity is regulated as follows. Transcriptional activity at macrophage-specific genes is inhibited by interaction with GFI1, which results in the inhibition of SPI1-induced macrophage differentiation of myeloid progenitor cells, but not that of the granulocyte lineage. Pioneer transcription factor, which controls hematopoietic cell fate by decompacting stem cell heterochromatin and allowing other transcription factors to enter otherwise inaccessible genomic sites. Once in open chromatin, can directly control gene expression by binding genetic regulatory elements and can also more broadly influence transcription by recruiting transcription factors, such as interferon regulatory factors (IRFs), to otherwise inaccessible genomic regions. Transcriptionally activates genes important for myeloid and lymphoid lineages, such as CSF1R or FCER1A. Transcriptional activation from certain promoters, possibly containing low affinity binding sites, is achieved cooperatively with other transcription factors. FCER1A transactivation is achieved in cooperation with GATA1. May be particularly important for the pro- to pre-B cell transition. Binds (via the ETS domain) onto the purine-rich DNA core sequence 5'-GAGGAA-3', also known as the PU-box. In vitro can bind RNA and interfere with pre-mRNA splicing. This is Transcription factor PU.1 (Spi1) from Rattus norvegicus (Rat).